The primary structure comprises 341 residues: HMG box-containing protein C10F6.08c (341 aa).

Over residues Ser-68 to Gln-77 the composition is skewed to basic and acidic residues. 2 disordered regions span residues Ser-68–Lys-195 and Leu-236–Ala-341. Polar residues-rich tracts occupy residues Asp-116–Gln-157 and Asn-165–Leu-177. Residues Lys-178–Lys-195 show a composition bias toward low complexity. The segment at residues Lys-195–Ser-263 is a DNA-binding region (HMG box). Basic and acidic residues-rich tracts occupy residues Glu-238–Arg-256 and Lys-269–Glu-304. A phosphothreonine mark is found at Thr-314 and Thr-315. Ser-316 is subject to Phosphoserine.

It localises to the nucleus. In Schizosaccharomyces pombe (strain 972 / ATCC 24843) (Fission yeast), this protein is HMG box-containing protein C10F6.08c.